We begin with the raw amino-acid sequence, 154 residues long: Myoglobin (154 aa).

In terms of domain architecture, Globin spans 2 to 148 (GLSDGEWQLV…FRNDMAAKYK (147 aa)). A Phosphoserine modification is found at serine 4. Histidine 65 is a binding site for nitrite. Histidine 65 provides a ligand contact to O2. Threonine 68 carries the post-translational modification Phosphothreonine. Histidine 94 contributes to the heme b binding site.

Belongs to the globin family. As to quaternary structure, monomeric.

Its subcellular location is the cytoplasm. The protein localises to the sarcoplasm. The enzyme catalyses Fe(III)-heme b-[protein] + nitric oxide + H2O = Fe(II)-heme b-[protein] + nitrite + 2 H(+). It catalyses the reaction H2O2 + AH2 = A + 2 H2O. Its function is as follows. Monomeric heme protein which primary function is to store oxygen and facilitate its diffusion within muscle tissues. Reversibly binds oxygen through a pentacoordinated heme iron and enables its timely and efficient release as needed during periods of heightened demand. Depending on the oxidative conditions of tissues and cells, and in addition to its ability to bind oxygen, it also has a nitrite reductase activity whereby it regulates the production of bioactive nitric oxide. Under stress conditions, like hypoxia and anoxia, it also protects cells against reactive oxygen species thanks to its pseudoperoxidase activity. The polypeptide is Myoglobin (MB) (Ornithorhynchus anatinus (Duckbill platypus)).